Consider the following 405-residue polypeptide: Serpin H1 (405 aa).

The N-terminal stretch at M1–A15 is a signal peptide. Residues N107 and N112 are each glycosylated (N-linked (GlcNAc...) asparagine). The short motif at R402–L405 is the Prevents secretion from ER element.

This sequence belongs to the serpin family.

The protein resides in the endoplasmic reticulum lumen. In terms of biological role, binds specifically to collagen. Could be involved as a chaperone in the biosynthetic pathway of collagen. In Gallus gallus (Chicken), this protein is Serpin H1 (SERPINH1).